Here is a 1286-residue protein sequence, read N- to C-terminus: MAVISKVTYSLYDQKEINATDIIISHVKNDDDIGTVKDGRLGAMDGALCKTCGKTELECFGHWGKVSIYKTHIVKPEFISEIIRLLNYICIHCGLLRSREPYSDDINLKELSGHALRRLKDKILSKKKSCWNSECMQPYQKITFSKKKVCFVNKLDDINVPNSLIYQKLISIHEKFWPLLEIHQYPANLFYTDYFPIPPLIIRPAISFWIDSIPKETNELTYLLGMIVKNCNLNADEQVIQKAVIEYDDIKIISNNTSSINLSYITSGKNNMIRSYIVARRKDQTARSVIGPSTSITVNEVGMPAYIRNTLTEKIFVNAFTVDKVKQLLASNQVKFYFNKRLNQLTRIRQGKFIKNKIHLLPGDWVEVAVQEYTSIIFGRQPSLHRYNVIASSIRATEGDTIKISPGIVNSQNADFDGDEEWMILEQNPKAVIEQSILMYPTTLLKHDIHGAPVYGSIQDEIVAAYSLFRIQDLCLDEVLNILGKYGREFDPKGKCKFSGKDIYTYLIGEKINYPGLLKDGEIIANDVDSNFVVAMRHLSLAGLLSDHKSNVEGINFIIKSSYVFKRYLSIYGFGVTFKDLRPNSTFTNKLEAINVEKIELIKEAYAKYLNDVRDGKIVPLSKALEADYVESMLSNLTNLNIREIEEHMRQTLIDDPDNNLLKMAKAGYKVNPTELMYILGTYGQQRIDGEPAETRVLGRVLPYYLPDSKDPEGRGYILNSLTKGLTGSQYYFSMLVARSQSTDIVCETSRTGTLARKIIKKMEDMVVDGYGQVVIGNTLIKYAANYTKILGSVCKPVDLIYPDESMTWYLEISALWNKIKQGFVYSQKQKLAKKTLAPFNFLVFVKPTTEDNAIKVKDLYDMIHNVIDDVREKYFFTVSNIDFMEYIFLTHLNPSRIRITKETAITIFEKFYEKLNYTLGGGTPIGIISAQVLSEKFTQQALSSFHTTEKSGAVKQKLGFNEFNNLTNLSKNKTEIITLVSDDISKLQSVKINFEFVCLGELNPNITLRKETDRYVVDIIVNRLYIKRAEITELVVEYMIERFISFSVIVKEWGMETFIEDEDNIRFTVYLNFVEPEELNLSKFMMVLPGAANKGKISKFKIPISDYTGYDDFNQTKKLNKMTVELMNLKELGSFDLENVNVYPGVWNTYDIFGIEAAREYLCEAMLNTYGEGFDYLYQPCDLLASLLCASYEPESVNKFKFGAASTLKRATFGDNKALLNAALHKKSEPINDNSSCHFFSKVPNIGTGYYKYFIDLGLLMRMERKLSDKISSQKIKEMEETEDF.

This sequence belongs to the poxviridae DNA-directed RNA polymerase 147 kDa subunit family. In terms of assembly, the DNA-dependent RNA polymerase used for intermediate and late genes expression consists of eight subunits Rpo30/OPG66, Rpo7/OPG90, Rpo22/OPG103, Rpo147/OPG105, Rpo18/OPG119, Rpo19/OPG131, Rpo132/OPG151 and Rpo35/OPG156. The same holoenzyme, with the addition of the transcription-specificity factor OPG109, is used for early gene expression.

It is found in the virion. It carries out the reaction RNA(n) + a ribonucleoside 5'-triphosphate = RNA(n+1) + diphosphate. Its function is as follows. Part of the DNA-dependent RNA polymerase which catalyzes the transcription of viral DNA into RNA using the four ribonucleoside triphosphates as substrates. Responsible for the transcription of early, intermediate and late genes. DNA-dependent RNA polymerase associates with the early transcription factor (ETF), itself composed of OPG118 and OPG133, thereby allowing the early genes transcription. Late transcription, and probably also intermediate transcription, require newly synthesized RNA polymerase. The chain is DNA-directed RNA polymerase 147 kDa polypeptide (OPG105) from Vaccinia virus (strain Ankara) (VACV).